The following is a 281-amino-acid chain: Probable endonuclease 4 (281 aa).

Zn(2+)-binding residues include H69, H109, E145, D179, H182, H216, D229, H231, and E261.

This sequence belongs to the AP endonuclease 2 family. Requires Zn(2+) as cofactor.

It catalyses the reaction Endonucleolytic cleavage to 5'-phosphooligonucleotide end-products.. Its function is as follows. Endonuclease IV plays a role in DNA repair. It cleaves phosphodiester bonds at apurinic or apyrimidinic (AP) sites, generating a 3'-hydroxyl group and a 5'-terminal sugar phosphate. The protein is Probable endonuclease 4 of Proteus mirabilis (strain HI4320).